The following is a 543-amino-acid chain: Rop guanine nucleotide exchange factor 11 (543 aa).

The interval 61–89 is disordered; it reads QPGKCGSVDRPSLPIGGVTPNRNDKLPRV. Positions 95–456 constitute a PRONE domain; the sequence is MEALIILQAA…QLTQEPTNNA (362 aa).

Interacts with ARAC4/ROP2, ARAC3/ROP, ARAC9/ROP8, PHYA and PHYB. Highly expressed in elongating regions of roots and pollen grains. Expressed in flowers, and at lower levels in leaves and stems.

The protein resides in the cytoplasm. In terms of biological role, guanine-nucleotide exchange factor (GEF) that acts as an activator of Rop (Rho of plants) GTPases by promoting the exchange of GDP for GTP. Functions as a light-signaling switch that functions in root growth and development through the activation of Rop in a phytochrome-dependent manner. May act as a negative regulator of phytochrome-mediated primary root development. The chain is Rop guanine nucleotide exchange factor 11 (ROPGEF11) from Arabidopsis thaliana (Mouse-ear cress).